Reading from the N-terminus, the 254-residue chain is Small ribosomal subunit protein uS2 (254 aa).

It belongs to the universal ribosomal protein uS2 family.

The chain is Small ribosomal subunit protein uS2 from Borrelia duttonii (strain Ly).